A 309-amino-acid polypeptide reads, in one-letter code: Aspartate carbamoyltransferase catalytic subunit (309 aa).

Carbamoyl phosphate contacts are provided by arginine 55 and threonine 56. L-aspartate is bound at residue lysine 85. Residues arginine 106, histidine 135, and glutamine 138 each coordinate carbamoyl phosphate. Positions 168 and 230 each coordinate L-aspartate. 2 residues coordinate carbamoyl phosphate: leucine 268 and proline 269.

The protein belongs to the aspartate/ornithine carbamoyltransferase superfamily. ATCase family. In terms of assembly, heterododecamer (2C3:3R2) of six catalytic PyrB chains organized as two trimers (C3), and six regulatory PyrI chains organized as three dimers (R2).

The enzyme catalyses carbamoyl phosphate + L-aspartate = N-carbamoyl-L-aspartate + phosphate + H(+). Its pathway is pyrimidine metabolism; UMP biosynthesis via de novo pathway; (S)-dihydroorotate from bicarbonate: step 2/3. Functionally, catalyzes the condensation of carbamoyl phosphate and aspartate to form carbamoyl aspartate and inorganic phosphate, the committed step in the de novo pyrimidine nucleotide biosynthesis pathway. The polypeptide is Aspartate carbamoyltransferase catalytic subunit (Vibrio vulnificus (strain CMCP6)).